The following is a 404-amino-acid chain: Zinc metalloprotease Rip1 (404 aa).

Residues 1–21 (MMFVTGIVLFALAILISVALH) traverse the membrane as a helical segment. Zn(2+) is bound at residue His-21. Glu-22 is a catalytic residue. Residue His-25 coordinates Zn(2+). The helical transmembrane segment at 104 to 124 (PGMNLAICLVLIYAIALVWGL) threads the bilayer. A PDZ domain is found at 121-203 (VWGLPNLHPP…SVPIVVERDG (83 aa)). Asp-202 serves as a coordination point for Zn(2+). The next 2 membrane-spanning stretches (helical) occupy residues 313-333 (LWVAFWFFLAQLNLILATINL) and 373-393 (LLPATYVVLVLVVGYMLLTVT).

This sequence belongs to the peptidase M50B family. The cofactor is Zn(2+).

Its subcellular location is the cell membrane. A probable intramembrane site-2 protease (S2P) that cleaves type-2 transmembrane proteins within their membrane-spanning domains. Cleaves PbpB (PBP3, FtsI); cleavage is inhibited by Wag31-PbpB interaction. Probably also cleaves anti-sigma factors RskA, RslA and RsmA. Functionally, regulated intramembrane proteolysis (RIP) occurs when an extracytoplasmic signal (possibly oxidative stress) triggers a concerted proteolytic cascade to transmit information and elicit cellular responses. The membrane-spanning regulatory substrate protein (includes anti-sigma factors RskA, RslA, RsmA, and PbpB in M.tuberculosis) is first cut extracytoplasmically (site-1 protease, S1P), then within the membrane itself (site-2 protease, S2P, this entry), while cytoplasmic proteases finish degrading the regulatory protein, liberating the effector protein (ECF sigma factors SigK, SigL and SigM). This Mycobacterium bovis (strain BCG / Pasteur 1173P2) protein is Zinc metalloprotease Rip1 (rip1).